The following is a 90-amino-acid chain: Acylphosphatase (90 aa).

One can recognise an Acylphosphatase-like domain in the interval 5 to 90 (CEKFVVSGIV…CREYQGFEIL (86 aa)). Catalysis depends on residues Arg20 and Asn38.

The protein belongs to the acylphosphatase family.

The enzyme catalyses an acyl phosphate + H2O = a carboxylate + phosphate + H(+). This chain is Acylphosphatase (acyP), found in Vibrio vulnificus (strain CMCP6).